We begin with the raw amino-acid sequence, 159 residues long: Transcriptional repressor NrdR (159 aa).

A zinc finger spans residues 3-34 (CPFCRHDDTQVVDSRVSEDGAAIRRRRRCSAC). An ATP-cone domain is found at 49–139 (PAVVKKDGSR…VYRRFEDVSE (91 aa)).

Belongs to the NrdR family. Zn(2+) serves as cofactor.

Functionally, negatively regulates transcription of bacterial ribonucleotide reductase nrd genes and operons by binding to NrdR-boxes. This chain is Transcriptional repressor NrdR, found in Burkholderia pseudomallei (strain 1106a).